We begin with the raw amino-acid sequence, 94 residues long: Cell division protein FtsB (94 aa).

Residues Met-1–Val-3 lie on the Cytoplasmic side of the membrane. The helical transmembrane segment at Phe-4–Trp-21 threads the bilayer. The Periplasmic segment spans residues Gly-22 to Gln-94. A coiled-coil region spans residues Gln-33–Gly-76.

It belongs to the FtsB family. Part of a complex composed of FtsB, FtsL and FtsQ.

The protein localises to the cell inner membrane. Functionally, essential cell division protein. May link together the upstream cell division proteins, which are predominantly cytoplasmic, with the downstream cell division proteins, which are predominantly periplasmic. The polypeptide is Cell division protein FtsB (Vibrio cholerae serotype O1 (strain ATCC 39315 / El Tor Inaba N16961)).